The chain runs to 244 residues: UPF0280 protein Mhun_0136 (244 aa).

It belongs to the UPF0280 family.

The sequence is that of UPF0280 protein Mhun_0136 from Methanospirillum hungatei JF-1 (strain ATCC 27890 / DSM 864 / NBRC 100397 / JF-1).